We begin with the raw amino-acid sequence, 362 residues long: Chorismate synthase (362 aa).

An NADP(+)-binding site is contributed by Arg-47. FMN-binding positions include 124-126 (RAS), Gly-286, 301-305 (KPTAT), and Arg-327.

This sequence belongs to the chorismate synthase family. Homotetramer. Requires FMNH2 as cofactor.

It carries out the reaction 5-O-(1-carboxyvinyl)-3-phosphoshikimate = chorismate + phosphate. The protein operates within metabolic intermediate biosynthesis; chorismate biosynthesis; chorismate from D-erythrose 4-phosphate and phosphoenolpyruvate: step 7/7. Functionally, catalyzes the anti-1,4-elimination of the C-3 phosphate and the C-6 proR hydrogen from 5-enolpyruvylshikimate-3-phosphate (EPSP) to yield chorismate, which is the branch point compound that serves as the starting substrate for the three terminal pathways of aromatic amino acid biosynthesis. This reaction introduces a second double bond into the aromatic ring system. The sequence is that of Chorismate synthase from Synechococcus sp. (strain WH7803).